A 66-amino-acid polypeptide reads, in one-letter code: Putative membrane protein insertion efficiency factor (66 aa).

It belongs to the UPF0161 family.

The protein localises to the cell inner membrane. Could be involved in insertion of integral membrane proteins into the membrane. The sequence is that of Putative membrane protein insertion efficiency factor from Parasynechococcus marenigrum (strain WH8102).